We begin with the raw amino-acid sequence, 444 residues long: Glycerol-3-phosphate transporter (444 aa).

At 1-36 (MLNIFKPAPHIERLDDSKMDAAYKRLRLQVFIGIFI) the chain is on the cytoplasmic side. Residues 37–57 (GYAGYYLLRKNFAFAIPYLQE) form a helical membrane-spanning segment. At 58–63 (QGFSKT) the chain is on the extracellular side. A helical membrane pass occupies residues 64-84 (ELGLVLAAVSIAYGFSKFIMG). The Cytoplasmic portion of the chain corresponds to 85-93 (MVSDRCNPR). A helical membrane pass occupies residues 94-112 (YFLATGLFLSAIVNILFVS). Residues 113–120 (MPWVTSSV) lie on the Extracellular side of the membrane. The chain crosses the membrane as a helical span at residues 121 to 141 (TIMFIFMFINGWFQGMGWPPC). At 142-160 (GRTMAHWFSISERGTKMSI) the chain is on the cytoplasmic side. The helical transmembrane segment at 161-180 (WNVAHNIGGGILAPLVTLGI) threads the bilayer. The Extracellular portion of the chain corresponds to 181–189 (AMFVTWKSV). Residues 190-207 (FFFPAIIAIIISFLIVLL) form a helical membrane-spanning segment. Residues 208–261 (VRDTPQSCGLPPIEEYRNDYPKHAFKNQEKELTTKEILFQYVLNNKFLWYIAFA) lie on the Cytoplasmic side of the membrane. A helical membrane pass occupies residues 262–282 (NVFVYFVRYGVVDWAPTYLTE). The Extracellular portion of the chain corresponds to 283-287 (AKGFS). Residues 288–308 (PEDSRWSYFLYEYAGIPGTIL) form a helical membrane-spanning segment. Residues 309 to 321 (CGWISDRFFKSRR) lie on the Cytoplasmic side of the membrane. The helical transmembrane segment at 322–341 (APAGVLFMAGVFIAVLVYWL) threads the bilayer. Residues 342–346 (NPAGN) are Extracellular-facing. The chain crosses the membrane as a helical span at residues 347–368 (PLVDNIALISIGFLIYGPVMLI). The Cytoplasmic segment spans residues 369–387 (GLQAIDLAPKKAAGTAAGL). Residues 388 to 409 (TGFFGYIGGSAFANAIMGFVVD) form a helical membrane-spanning segment. Residues 410 to 414 (RFNWN) lie on the Extracellular side of the membrane. Residues 415 to 435 (GGFIMLISSCILAIVFLALTW) form a helical membrane-spanning segment. The Cytoplasmic segment spans residues 436–444 (NTGKRAEHV).

It belongs to the major facilitator superfamily. Organophosphate:Pi antiporter (OPA) (TC 2.A.1.4) family.

It is found in the cell membrane. Responsible for glycerol-3-phosphate uptake. The sequence is that of Glycerol-3-phosphate transporter (glpT) from Bacillus subtilis (strain 168).